The chain runs to 491 residues: MANYFNTLNLRQQLAQLGKCRFMGRDEFADGASYLQGKKVVIVGCGAQGLNQGLNMRDSGLDISYALRKEAIAEKRASWRKATENGFKVGTYEELIPQADLVVNLTPDKQHSDVVHTVQPLMKDGAALGYSHGFNIVEVGEQIRKDITVVMVAPKCPGTEVREEYKRGFGVPTLIAVHPENDPKGEGMAIAKAWAAATGGHRAGVLESSFVAEVKSDLMGEQTILCGMLQAGSLLCFDKLVEEGTDPAYAEKLIQFGWETITEALKQGGITLMMDRLSNPAKLRAYALSEQLKEIMAPLFQKHMDDIISGEFSSGMMADWANDDKKLLTWREETGKTAFETAPQYEGKIGEQEYFDKGVLMIAMVKAGVELAFETMVDSGIIEESAYYESLHELPLIANTIARKRLYEMNVVISDTAEYGNYLFSYACVPLLKPFMAELQPGDLGKAIPEGAVDNAQLRDLNEAIRSHAIEQVGKKLRGYMTDMKRIAVAG.

The KARI N-terminal Rossmann domain maps to 15 to 208 (AQLGKCRFMG…GGHRAGVLES (194 aa)). NADP(+) is bound by residues 45-48 (CGAQ), Arg68, Arg76, Ser78, and 108-110 (DKQ). The active site involves His132. Gly158 contacts NADP(+). KARI C-terminal knotted domains follow at residues 209–344 (SFVA…TAPQ) and 345–484 (YEGK…MTDM). Residues Asp217, Glu221, Glu389, and Glu393 each contribute to the Mg(2+) site. Ser414 serves as a coordination point for substrate.

Belongs to the ketol-acid reductoisomerase family. Requires Mg(2+) as cofactor.

It catalyses the reaction (2R)-2,3-dihydroxy-3-methylbutanoate + NADP(+) = (2S)-2-acetolactate + NADPH + H(+). The catalysed reaction is (2R,3R)-2,3-dihydroxy-3-methylpentanoate + NADP(+) = (S)-2-ethyl-2-hydroxy-3-oxobutanoate + NADPH + H(+). The protein operates within amino-acid biosynthesis; L-isoleucine biosynthesis; L-isoleucine from 2-oxobutanoate: step 2/4. It participates in amino-acid biosynthesis; L-valine biosynthesis; L-valine from pyruvate: step 2/4. Involved in the biosynthesis of branched-chain amino acids (BCAA). Catalyzes an alkyl-migration followed by a ketol-acid reduction of (S)-2-acetolactate (S2AL) to yield (R)-2,3-dihydroxy-isovalerate. In the isomerase reaction, S2AL is rearranged via a Mg-dependent methyl migration to produce 3-hydroxy-3-methyl-2-ketobutyrate (HMKB). In the reductase reaction, this 2-ketoacid undergoes a metal-dependent reduction by NADPH to yield (R)-2,3-dihydroxy-isovalerate. This is Ketol-acid reductoisomerase (NADP(+)) from Escherichia coli O157:H7.